Consider the following 370-residue polypeptide: MICPHQGTCGGCALALPYEEQWKLKESEFRELLPLSKDTPTDLYPSAPHSFRARAEFRLYRNESGRLSYAMSQKGSKQPLPIQSCPILLPSIQALMPSLLEALESDEILTQKLFGVEFLSGLSQEVLVSLLYHKRLDHAWEERALGLLSSLPTLSSLIGRSKGQKIVLGESFITETLTIDSKPWRFLHYEGSFTQPNPKVNEKMIEWIISAPPQGDLLELYCGAGNFTLPLSSRYAKILATEVSKTSIHAAKQNCELNSVRHISFVRLNAQETQSALEGEREFYRLRELDLPSYDFQAVFVDPPRAGLGAEVASFLRRFDQILYISCNPKTLQSDLEVLQLSHDVERFALFDQFPYTPHLESGVILRQRR.

Positions 195, 221, 226, 242, and 302 each coordinate S-adenosyl-L-methionine. Cys-327 (nucleophile) is an active-site residue. Glu-361 (proton acceptor) is an active-site residue.

It belongs to the class I-like SAM-binding methyltransferase superfamily. RNA M5U methyltransferase family. TrmA subfamily.

It catalyses the reaction uridine(54) in tRNA + S-adenosyl-L-methionine = 5-methyluridine(54) in tRNA + S-adenosyl-L-homocysteine + H(+). The catalysed reaction is uridine(341) in tmRNA + S-adenosyl-L-methionine = 5-methyluridine(341) in tmRNA + S-adenosyl-L-homocysteine + H(+). Its function is as follows. Dual-specificity methyltransferase that catalyzes the formation of 5-methyluridine at position 54 (m5U54) in all tRNAs, and that of position 341 (m5U341) in tmRNA (transfer-mRNA). This Wolinella succinogenes (strain ATCC 29543 / DSM 1740 / CCUG 13145 / JCM 31913 / LMG 7466 / NCTC 11488 / FDC 602W) (Vibrio succinogenes) protein is tRNA/tmRNA (uracil-C(5))-methyltransferase.